Consider the following 694-residue polypeptide: U-box domain-containing protein 1 (694 aa).

One can recognise a U-box domain in the interval 292-366 (NIPDEFRCPI…HQWCYENNVK (75 aa)). ARM repeat units lie at residues 392 to 432 (SENK…LLAK), 435 to 474 (MDNR…NLSI), 476 to 516 (DNNK…SLSM), 519 to 558 (DCKV…NLAV), 560 to 599 (NPNK…VLLG), 601 to 641 (SEGL…GLCK), and 646 to 685 (LVAM…LLNR).

In terms of assembly, interacts with LYK3. Binds to NORK/DMI2. Post-translationally, phosphorylated by LYK3 in vitro. Phosphorylated by NORK/DMI2. As to expression, present ubiquitously at very low levels during nonsymbiotic growth. Accumulates in roots and nodules during symbiotic growth with rhizobia and mycorrhiza.

Its subcellular location is the cell membrane. It carries out the reaction S-ubiquitinyl-[E2 ubiquitin-conjugating enzyme]-L-cysteine + [acceptor protein]-L-lysine = [E2 ubiquitin-conjugating enzyme]-L-cysteine + N(6)-ubiquitinyl-[acceptor protein]-L-lysine.. It participates in protein modification; protein ubiquitination. In terms of biological role, exhibits U-box-dependent E3 ubiquitin ligase activity in vitro. Negatively modulates successive stages of infection and development of rhizobial (e.g. Sinorhizobium meliloti) and arbuscular mycorrhizal fungi (AM, e.g. Rhizophagus irregularis) symbioses, in an ubiquitin ligase activity-dependent manner. Negative regulator of the LYK3 signaling pathway leading to nitrogen-fixing symbiosis (e.g. infection and nodulation) by rhizobia. May be involved in the discrimination of rhizobium strains producing variant Nod factors. This is U-box domain-containing protein 1 from Medicago truncatula (Barrel medic).